The following is a 681-amino-acid chain: DNA ligase (681 aa).

NAD(+) is bound by residues 34 to 38 (DEEYD), 83 to 84 (SL), and E112. K114 serves as the catalytic N6-AMP-lysine intermediate. The NAD(+) site is built by R135, E169, K285, and K309. Zn(2+) contacts are provided by C403, C406, C422, and C427. The BRCT domain occupies 584 to 673 (TTSNILDGLT…GVELKESWKK (90 aa)).

The protein belongs to the NAD-dependent DNA ligase family. LigA subfamily. The cofactor is Mg(2+). It depends on Mn(2+) as a cofactor.

The catalysed reaction is NAD(+) + (deoxyribonucleotide)n-3'-hydroxyl + 5'-phospho-(deoxyribonucleotide)m = (deoxyribonucleotide)n+m + AMP + beta-nicotinamide D-nucleotide.. In terms of biological role, DNA ligase that catalyzes the formation of phosphodiester linkages between 5'-phosphoryl and 3'-hydroxyl groups in double-stranded DNA using NAD as a coenzyme and as the energy source for the reaction. It is essential for DNA replication and repair of damaged DNA. The chain is DNA ligase from Fervidobacterium nodosum (strain ATCC 35602 / DSM 5306 / Rt17-B1).